Here is a 683-residue protein sequence, read N- to C-terminus: MADQTSQNDNQNGSGLPGGGPSGTGRGRLIIWVIAGTLLALWAYSYWGMGASGGERISYSEFRTQLQQENVERVEVKGNAINGSLKSQATRSEQGNTIEYQNFVTYLPSFGDEQLMDLLESQGVNVVTKPESSFPWGLVIMGLLPVLLLFGVGYIFLRRMQSQGQGLFSVRQSKAELYDKDEEDTTFDDVAGADSAKEELREIIKFLKNPKRFEGLGGKVPKGVLLVGPPGTGKTLLARAVAGEANAPFFSVSGSDFMEMFVGVGASRVRDMFSEAKETSPAIIFIDELDSIGRKRGAGLGGGNDEREQTLNQLLSELDGFEENEGVIVMAATNRPDILDSALTRPGRFDRQITVDLPTKQSRHEILKIHAREKPLSDDVDLEEIARSTPGFSGADLENLLNEAALLAGRHGHDAIQYSDIEQARDKVMMGLKRDGMVLDDEEKKLLAYHEAGHAIVGAVLPNADPVHKVTIVPRGKAMGVTQQLPEKDQYLYRHDYILDRLAVIMGGRAAEELIFDTATSGAENDLKQVRKMARKMVLDWGMGDQFKHISLGEDQGNVFLGDEIAKGREYSDDTAREVDEEIRRISEDAFQRAVDTLNEHHEAFDQLADMLIEQEEVSGKDVLNLVNGDTDEIGHMPTTNGAAASEENGSADDHEPDEATVIEEDGESGEGRASGSADASGS.

Over residues 1–12 the composition is skewed to polar residues; that stretch reads MADQTSQNDNQN. Positions 1-21 are disordered; that stretch reads MADQTSQNDNQNGSGLPGGGP. The Cytoplasmic portion of the chain corresponds to 1–28; that stretch reads MADQTSQNDNQNGSGLPGGGPSGTGRGR. A helical transmembrane segment spans residues 29 to 49; that stretch reads LIIWVIAGTLLALWAYSYWGM. Residues 50–136 lie on the Periplasmic side of the membrane; that stretch reads GASGGERISY…VTKPESSFPW (87 aa). The helical transmembrane segment at 137–157 threads the bilayer; that stretch reads GLVIMGLLPVLLLFGVGYIFL. Residues 158-683 lie on the Cytoplasmic side of the membrane; it reads RRMQSQGQGL…ASGSADASGS (526 aa). 228 to 235 contacts ATP; the sequence is GPPGTGKT. His-450 is a Zn(2+) binding site. Glu-451 is an active-site residue. His-454 and Asp-526 together coordinate Zn(2+). The segment at 627 to 683 is disordered; the sequence is VNGDTDEIGHMPTTNGAAASEENGSADDHEPDEATVIEEDGESGEGRASGSADASGS. Residues 655 to 669 are compositionally biased toward acidic residues; sequence HEPDEATVIEEDGES. Residues 672–683 show a composition bias toward low complexity; it reads GRASGSADASGS.

In the central section; belongs to the AAA ATPase family. It in the C-terminal section; belongs to the peptidase M41 family. Homohexamer. Zn(2+) is required as a cofactor.

Its subcellular location is the cell inner membrane. Its function is as follows. Acts as a processive, ATP-dependent zinc metallopeptidase for both cytoplasmic and membrane proteins. Plays a role in the quality control of integral membrane proteins. This is ATP-dependent zinc metalloprotease FtsH 2 from Salinibacter ruber (strain M8).